We begin with the raw amino-acid sequence, 569 residues long: 2-succinyl-5-enolpyruvyl-6-hydroxy-3-cyclohexene-1-carboxylate synthase (569 aa).

Belongs to the TPP enzyme family. MenD subfamily. In terms of assembly, homodimer. Requires Mg(2+) as cofactor. Mn(2+) is required as a cofactor. Thiamine diphosphate serves as cofactor.

The enzyme catalyses isochorismate + 2-oxoglutarate + H(+) = 5-enolpyruvoyl-6-hydroxy-2-succinyl-cyclohex-3-ene-1-carboxylate + CO2. It participates in quinol/quinone metabolism; 1,4-dihydroxy-2-naphthoate biosynthesis; 1,4-dihydroxy-2-naphthoate from chorismate: step 2/7. The protein operates within cofactor biosynthesis; phylloquinone biosynthesis. Catalyzes the thiamine diphosphate-dependent decarboxylation of 2-oxoglutarate and the subsequent addition of the resulting succinic semialdehyde-thiamine pyrophosphate anion to isochorismate to yield 2-succinyl-5-enolpyruvyl-6-hydroxy-3-cyclohexene-1-carboxylate (SEPHCHC). This is 2-succinyl-5-enolpyruvyl-6-hydroxy-3-cyclohexene-1-carboxylate synthase from Microcystis aeruginosa (strain NIES-843 / IAM M-2473).